The following is a 378-amino-acid chain: H repeat-associated putative transposase YhhI (378 aa).

The protein belongs to the transposase 11 family.

The protein is H repeat-associated putative transposase YhhI (yhhI) of Escherichia coli (strain K12).